The primary structure comprises 161 residues: MATLQSLADLNRANTQTSNPENEAPVHVQKLDAQGRAYATGKRKDAVARVWIKPGNGTVVVNGRPVETYFARPVLRMILRQPLEIVSRVDQYDITVTVKGGGLSGQAGAVRHGLSKALTYYEPELRSSLKREGFLTRDPRVVERKKYGRKKARRSFQFSKR.

The segment covering 1-21 has biased composition (polar residues); it reads MATLQSLADLNRANTQTSNPE. Residues 1–25 are disordered; it reads MATLQSLADLNRANTQTSNPENEAP.

The protein belongs to the universal ribosomal protein uS9 family.

The polypeptide is Small ribosomal subunit protein uS9 (Methylorubrum extorquens (strain CM4 / NCIMB 13688) (Methylobacterium extorquens)).